The following is a 380-amino-acid chain: O-phospho-L-seryl-tRNA:Cys-tRNA synthase (380 aa).

Pyridoxal 5'-phosphate-binding positions include 86–87, N192, and 215–217; these read AR and SGH. K218 is modified (N6-(pyridoxal phosphate)lysine).

This sequence belongs to the SepCysS family. Homodimer. Interacts with SepRS. Requires pyridoxal 5'-phosphate as cofactor.

It catalyses the reaction O-phospho-L-seryl-tRNA(Cys) + hydrogen sulfide + H(+) = L-cysteinyl-tRNA(Cys) + phosphate. Functionally, converts O-phospho-L-seryl-tRNA(Cys) (Sep-tRNA(Cys)) to L-cysteinyl-tRNA(Cys) (Cys-tRNA(Cys)). The sequence is that of O-phospho-L-seryl-tRNA:Cys-tRNA synthase from Methanococcus maripaludis (strain C7 / ATCC BAA-1331).